The chain runs to 120 residues: Adult-specific rigid cuticular protein 11.9 (120 aa).

The Chitin-binding type R&amp;R domain maps to 9-87 (GGAYNFGYNT…ALAAMAPKAP (79 aa)).

In terms of biological role, component of the rigid cuticle of the spider. This chain is Adult-specific rigid cuticular protein 11.9, found in Araneus diadematus (European garden spider).